Consider the following 692-residue polypeptide: Elongation factor G (692 aa).

In terms of domain architecture, tr-type G spans 8-282; it reads EKTRNIGIMA…AIVDYLPAPT (275 aa). GTP-binding positions include 17 to 24, 81 to 85, and 135 to 138; these read AHIDAGKT, DTPGH, and NKMD.

It belongs to the TRAFAC class translation factor GTPase superfamily. Classic translation factor GTPase family. EF-G/EF-2 subfamily.

The protein resides in the cytoplasm. Its function is as follows. Catalyzes the GTP-dependent ribosomal translocation step during translation elongation. During this step, the ribosome changes from the pre-translocational (PRE) to the post-translocational (POST) state as the newly formed A-site-bound peptidyl-tRNA and P-site-bound deacylated tRNA move to the P and E sites, respectively. Catalyzes the coordinated movement of the two tRNA molecules, the mRNA and conformational changes in the ribosome. In Pelotomaculum thermopropionicum (strain DSM 13744 / JCM 10971 / SI), this protein is Elongation factor G.